Here is a 233-residue protein sequence, read N- to C-terminus: Orotidine 5'-phosphate decarboxylase (233 aa).

Residues aspartate 11, lysine 34, 61–70 (DLKLHDIPNT), threonine 117, arginine 179, glutamine 188, glycine 208, and arginine 209 each bind substrate. Lysine 63 acts as the Proton donor in catalysis.

The protein belongs to the OMP decarboxylase family. Type 1 subfamily. As to quaternary structure, homodimer.

The catalysed reaction is orotidine 5'-phosphate + H(+) = UMP + CO2. The protein operates within pyrimidine metabolism; UMP biosynthesis via de novo pathway; UMP from orotate: step 2/2. Catalyzes the decarboxylation of orotidine 5'-monophosphate (OMP) to uridine 5'-monophosphate (UMP). The protein is Orotidine 5'-phosphate decarboxylase of Streptococcus pneumoniae (strain Hungary19A-6).